Consider the following 308-residue polypeptide: Putative S-adenosyl-L-methionine-dependent methyltransferase Mmcs_1045 (308 aa).

S-adenosyl-L-methionine-binding positions include Asp-133 and 162-163 (DL).

Belongs to the UPF0677 family.

In terms of biological role, exhibits S-adenosyl-L-methionine-dependent methyltransferase activity. The protein is Putative S-adenosyl-L-methionine-dependent methyltransferase Mmcs_1045 of Mycobacterium sp. (strain MCS).